A 140-amino-acid chain; its full sequence is Nucleoside diphosphate kinase (140 aa).

Positions 11, 59, 87, 93, 104, and 114 each coordinate ATP. The active-site Pros-phosphohistidine intermediate is His-117.

This sequence belongs to the NDK family. Homotetramer. It depends on Mg(2+) as a cofactor.

It localises to the cytoplasm. The enzyme catalyses a 2'-deoxyribonucleoside 5'-diphosphate + ATP = a 2'-deoxyribonucleoside 5'-triphosphate + ADP. It carries out the reaction a ribonucleoside 5'-diphosphate + ATP = a ribonucleoside 5'-triphosphate + ADP. In terms of biological role, major role in the synthesis of nucleoside triphosphates other than ATP. The ATP gamma phosphate is transferred to the NDP beta phosphate via a ping-pong mechanism, using a phosphorylated active-site intermediate. This is Nucleoside diphosphate kinase from Nitrobacter hamburgensis (strain DSM 10229 / NCIMB 13809 / X14).